Here is a 406-residue protein sequence, read N- to C-terminus: Vacuole membrane protein 1 (406 aa).

Residues 1 to 22 (MAENGTDCEQRRVGMPKEQNNG) form a disordered region. The Cytoplasmic portion of the chain corresponds to 1 to 42 (MAENGTDCEQRRVGMPKEQNNGSFQDPSFMCNRKRRDREERQ). Residues 43–63 (SIVLWRKPLITLQYFILEVLI) form a helical membrane-spanning segment. The Extracellular segment spans residues 64 to 76 (NLKEWSVRLWHRR). The chain crosses the membrane as a helical span at residues 77–97 (MMVVSVLLLLAVLSVAYYIEG). Residues 98–110 (EHQQCVQYIEKKC) lie on the Cytoplasmic side of the membrane. Residues 111-131 (LWCAYWVGLGILSSVGLGTGL) form a helical membrane-spanning segment. Topologically, residues 132-250 (HTFLLYLGPH…ATRAKLTVQN (119 aa)) are extracellular. The tract at residues 173–316 (GTEGAISLWT…FVIITFSKHI (144 aa)) is VTT domain. The chain crosses the membrane as a helical span at residues 251–271 (LVQKVGFLGILACASIPNPLF). Residues 272 to 273 (DL) lie on the Cytoplasmic side of the membrane. A helical transmembrane segment spans residues 274-294 (AGITCGHFLVPFWTFFGATLI). At 295–306 (GKAIIKMHIQKL) the chain is on the extracellular side. Residues 307–327 (FVIITFSKHIVEQMVSLIGVI) form a helical membrane-spanning segment. Residues 328–363 (PSIGPSLQKPFQEYLEAQRKKLHHKGDSGTPQSENW) lie on the Cytoplasmic side of the membrane. A helical transmembrane segment spans residues 364–384 (LSWAFEKLVIIMVFYFILSII). Residues 385 to 406 (NSMAQSYAKRVQQKKLSVEKTK) lie on the Extracellular side of the membrane.

This sequence belongs to the VMP1 family.

It localises to the endoplasmic reticulum-Golgi intermediate compartment membrane. Its subcellular location is the cell membrane. The protein localises to the vacuole membrane. The protein resides in the endoplasmic reticulum membrane. It catalyses the reaction a 1,2-diacyl-sn-glycero-3-phospho-L-serine(in) = a 1,2-diacyl-sn-glycero-3-phospho-L-serine(out). It carries out the reaction cholesterol(in) = cholesterol(out). The enzyme catalyses a 1,2-diacyl-sn-glycero-3-phosphocholine(in) = a 1,2-diacyl-sn-glycero-3-phosphocholine(out). The catalysed reaction is a 1,2-diacyl-sn-glycero-3-phosphoethanolamine(in) = a 1,2-diacyl-sn-glycero-3-phosphoethanolamine(out). Its function is as follows. Phospholipid scramblase involved in lipid homeostasis and membrane dynamics processes. Has phospholipid scramblase activity toward cholesterol and phosphatidylserine, as well as phosphatidylethanolamine and phosphatidylcholine. Required for autophagosome formation: participates in early stages of autophagosome biogenesis at the endoplasmic reticulum (ER) membrane by reequilibrating the leaflets of the ER as lipids are extracted by atg2 (atg2a or atg2b) to mediate autophagosome assembly. In addition to autophagy, involved in other processes in which phospholipid scramblase activity is required. Modulates ER contacts with lipid droplets, mitochondria and endosomes. This chain is Vacuole membrane protein 1, found in Xenopus laevis (African clawed frog).